A 62-amino-acid polypeptide reads, in one-letter code: Conotoxin Lt5.8 (62 aa).

Positions 1–19 (MLCLPVFIILLLLVSPAAT) are cleaved as a signal peptide. The propeptide occupies 20–47 (MPVDLEILKAPTKESRKDFEMRIELLRS). Pyrrolidone carboxylic acid is present on Gln-50. A Glutamine amide modification is found at Gln-61.

It belongs to the conotoxin T superfamily. In terms of processing, contains 2 disulfide bonds that can be either 'C1-C3, C2-C4' or 'C1-C4, C2-C3', since these disulfide connectivities have been observed for conotoxins with cysteine framework V (for examples, see AC P0DQQ7 and AC P81755). Expressed by the venom duct.

Its subcellular location is the secreted. This Conus litteratus (Lettered cone) protein is Conotoxin Lt5.8.